A 294-amino-acid polypeptide reads, in one-letter code: MPELPTDRLTAVIPPEETLLGYLLRLSRPRFWLYLGGPVIVGVSYAADGPGELFSPLAIALFLYFTIPGNVFLYGVNDIFDADIDEHNPKKDDGREVSYRGDSAVTAIVVASGALALLFALVLPTLGIVALLAWMALSVEYSAPPLRFKTTPFLDSISNGLYILPGVIGYAAIEGVAPPATAVVGAWLWAMGMHTFSAIPDIEPDREAGIQTTATFLGESNTYYYCVMCWLMAAFVFNFTHWVFGVLLLVYPGLVFGILGVGVDIDEAYWWYPAINTVVGMVFTLIALWVMLYG.

The next 8 helical transmembrane spans lie at 31–51 (FWLY…DGPG), 53–73 (LFSP…NVFL), 115–135 (LALL…LAWM), 160–180 (GLYI…APPA), 182–202 (AVVG…IPDI), 222–242 (TYYY…FTHW), 243–263 (VFGV…GVGV), and 274–294 (AINT…MLYG).

This sequence belongs to the UbiA prenyltransferase family.

It localises to the cell membrane. It catalyses the reaction all-trans-lycopene + dimethylallyl diphosphate + H2O = dihydroisopentenyldehydrorhodopin + diphosphate. It carries out the reaction isopentenyldehydrorhodopin + dimethylallyl diphosphate + H2O = dihydrobisanhydrobacterioruberin + diphosphate. It functions in the pathway carotenoid biosynthesis. Its function is as follows. Involved in the biosynthesis of the acyclic C50 carotenoid bacterioruberin (BR). Acts as a bifunctional elongase/hydratase that catalyzes the elongation of lycopene by attaching a C(5) isoprene unit at C-2, as well as the hydroxylation of the previous end of the molecule. The enzyme acts at both ends of the substrate, and catalyzes the conversion of lycopene to the C(45) intermediate dihydroisopentenyldehydrorhodopin (DH-IDR) and the conversion of isopentenyldehydrorhodopin (IDR) to the C(50) carotenoid dihydrobisanhydrobacterioruberin (DH-BABR). Can also catalyze the conversion of lycopene to tetrahydrobisanhydrobacterioruberin (TH-BABR). The polypeptide is Lycopene elongase/hydratase (Haloarcula japonica (strain ATCC 49778 / DSM 6131 / JCM 7785 / NBRC 101032 / NCIMB 13157 / TR-1)).